We begin with the raw amino-acid sequence, 350 residues long: Heme A synthase (350 aa).

8 helical membrane passes run 16-36 (LARW…VGGI), 77-97 (FQLV…IFFW), 101-121 (HRLL…WFWI), 136-156 (LLAL…SGIV), 170-190 (LLVA…LVAL), 201-221 (GIGL…ALVA), 265-285 (VFLV…VLVV), and 299-321 (IVLH…SGVA). Residue histidine 272 coordinates heme. Position 328 (histidine 328) interacts with heme.

Belongs to the COX15/CtaA family. Type 2 subfamily. Interacts with CtaB. It depends on heme b as a cofactor.

The protein resides in the cell membrane. It catalyses the reaction Fe(II)-heme o + 2 A + H2O = Fe(II)-heme a + 2 AH2. It participates in porphyrin-containing compound metabolism; heme A biosynthesis; heme A from heme O: step 1/1. Functionally, catalyzes the conversion of heme O to heme A by two successive hydroxylations of the methyl group at C8. The first hydroxylation forms heme I, the second hydroxylation results in an unstable dihydroxymethyl group, which spontaneously dehydrates, resulting in the formyl group of heme A. This Novosphingobium aromaticivorans (strain ATCC 700278 / DSM 12444 / CCUG 56034 / CIP 105152 / NBRC 16084 / F199) protein is Heme A synthase.